Consider the following 207-residue polypeptide: Small ribosomal subunit protein uS4 (207 aa).

Residues 31–55 (KCKLDSKPGQHGRTSGARTSDYGTQ) are disordered. Residues 42–53 (GRTSGARTSDYG) are compositionally biased toward polar residues. An S4 RNA-binding domain is found at 97–160 (SRLDNVVYRM…KKQARIVEAL (64 aa)).

This sequence belongs to the universal ribosomal protein uS4 family. As to quaternary structure, part of the 30S ribosomal subunit. Contacts protein S5. The interaction surface between S4 and S5 is involved in control of translational fidelity.

Functionally, one of the primary rRNA binding proteins, it binds directly to 16S rRNA where it nucleates assembly of the body of the 30S subunit. With S5 and S12 plays an important role in translational accuracy. The protein is Small ribosomal subunit protein uS4 of Burkholderia ambifaria (strain ATCC BAA-244 / DSM 16087 / CCUG 44356 / LMG 19182 / AMMD) (Burkholderia cepacia (strain AMMD)).